Consider the following 382-residue polypeptide: MQKIVFIDRDGTLIAEPQPDQQVDSLAKLDFIPKAISAMRKIAEDTTYELVMVTNQDGLGTGSFPEDTFWPAHNKMMSTFAGENVNFAAVHIDRHFPHDNSSTRKPGVGMLTQYFEASYDLTNSFVIGDRLTDVQLAVNLGAKAILFMPPNGLAAVQSADVSGLTEAMKQAIVLQTGDWDEIYEFLRLPARTALVERNTKETQIRVELNLDGRGRADMHTGLGFFDHMLDQVAKHSGADLAIHVNGDLHIDEHHTIEDTALALGEAYRRALGDKRGISRYGFLLPMDEALAQVGIDFSGRPWLVWDAEFKREKIGDMPTEMFYHFFKSFSDTALCNLNIKVEGDNEHHKIEAIFKAFAKAIKMAVRRDINELDNLPSTKGVL.

The interval 1–190 (MQKIVFIDRD…EIYEFLRLPA (190 aa)) is histidinol-phosphatase. The active-site Nucleophile is the D8. Positions 8, 10, and 129 each coordinate Mg(2+). The active-site Proton donor is the D10. Residues 191 to 382 (RTALVERNTK…DNLPSTKGVL (192 aa)) form an imidazoleglycerol-phosphate dehydratase region.

In the N-terminal section; belongs to the histidinol-phosphatase family. This sequence in the C-terminal section; belongs to the imidazoleglycerol-phosphate dehydratase family. Mg(2+) is required as a cofactor.

Its subcellular location is the cytoplasm. The catalysed reaction is D-erythro-1-(imidazol-4-yl)glycerol 3-phosphate = 3-(imidazol-4-yl)-2-oxopropyl phosphate + H2O. It catalyses the reaction L-histidinol phosphate + H2O = L-histidinol + phosphate. It functions in the pathway amino-acid biosynthesis; L-histidine biosynthesis; L-histidine from 5-phospho-alpha-D-ribose 1-diphosphate: step 6/9. It participates in amino-acid biosynthesis; L-histidine biosynthesis; L-histidine from 5-phospho-alpha-D-ribose 1-diphosphate: step 8/9. This is Histidine biosynthesis bifunctional protein HisB from Spirosoma linguale (strain ATCC 33905 / DSM 74 / LMG 10896 / Claus 1).